A 168-amino-acid chain; its full sequence is Small ribosomal subunit protein uS5 (168 aa).

Positions isoleucine 17 to valine 80 constitute an S5 DRBM domain.

This sequence belongs to the universal ribosomal protein uS5 family. As to quaternary structure, part of the 30S ribosomal subunit. Contacts proteins S4 and S8.

With S4 and S12 plays an important role in translational accuracy. Functionally, located at the back of the 30S subunit body where it stabilizes the conformation of the head with respect to the body. This Lactobacillus acidophilus (strain ATCC 700396 / NCK56 / N2 / NCFM) protein is Small ribosomal subunit protein uS5.